Consider the following 334-residue polypeptide: Geminin coiled-coil domain-containing protein 1 (334 aa).

The stretch at 82–119 (SQLYRNKQLQDTLVQKEEELARLHEENNHLRQYLNSAL) forms a coiled coil. A disordered region spans residues 143 to 167 (FRKGKRKSKEQRYSPAEIPHPKNAK).

This sequence belongs to the GEMC1 family. Post-translationally, highly phosphorylated by CDK2; stimulates initiation of DNA replication.

The protein resides in the nucleus. In terms of biological role, regulator of DNA replication. Promotes initiation of chromosomal DNA replication by mediating TOPBP1- and CDK2-dependent recruitment of CDC45L onto replication origins. The sequence is that of Geminin coiled-coil domain-containing protein 1 (GMNC) from Homo sapiens (Human).